A 183-amino-acid chain; its full sequence is Probable GTP-binding protein EngB (183 aa).

The EngB-type G domain maps to 18-183 (DQNEIVFWGR…LSDLVEHFEL (166 aa)). Residues 26 to 33 (GRSNVGKS), 52 to 56 (GRTRL), 70 to 73 (DLPG), 137 to 140 (TKID), and 166 to 168 (VSS) each bind GTP. S33 and T54 together coordinate Mg(2+).

The protein belongs to the TRAFAC class TrmE-Era-EngA-EngB-Septin-like GTPase superfamily. EngB GTPase family. Requires Mg(2+) as cofactor.

Its function is as follows. Necessary for normal cell division and for the maintenance of normal septation. This is Probable GTP-binding protein EngB from Metamycoplasma arthritidis (strain 158L3-1) (Mycoplasma arthritidis).